The chain runs to 166 residues: Small ribosomal subunit protein uS5 (166 aa).

The S5 DRBM domain maps to 11-74; sequence LQEKLISVNR…DKARKNMIII (64 aa).

Belongs to the universal ribosomal protein uS5 family. Part of the 30S ribosomal subunit. Contacts proteins S4 and S8.

With S4 and S12 plays an important role in translational accuracy. Its function is as follows. Located at the back of the 30S subunit body where it stabilizes the conformation of the head with respect to the body. This Wigglesworthia glossinidia brevipalpis protein is Small ribosomal subunit protein uS5.